We begin with the raw amino-acid sequence, 93 residues long: U12-lycotoxin-Ls1a (93 aa).

The signal sequence occupies residues Met-1 to Ser-18. The propeptide occupies Glu-19–Arg-38.

It belongs to the neurotoxin 31 family. In terms of processing, contains 5 disulfide bonds. As to expression, expressed by the venom gland.

The protein localises to the secreted. This chain is U12-lycotoxin-Ls1a, found in Lycosa singoriensis (Wolf spider).